The following is a 446-amino-acid chain: Histidine--tRNA ligase (446 aa).

It belongs to the class-II aminoacyl-tRNA synthetase family. In terms of assembly, homodimer.

The protein localises to the cytoplasm. It carries out the reaction tRNA(His) + L-histidine + ATP = L-histidyl-tRNA(His) + AMP + diphosphate + H(+). The sequence is that of Histidine--tRNA ligase from Paraburkholderia phytofirmans (strain DSM 17436 / LMG 22146 / PsJN) (Burkholderia phytofirmans).